The following is a 202-amino-acid chain: Ribonuclease HII (202 aa).

Residues 13 to 202 (KIEAGLDEAG…HFKPKQLDLF (190 aa)) form the RNase H type-2 domain. Asp19, Glu20, and Asp112 together coordinate a divalent metal cation.

It belongs to the RNase HII family. The cofactor is Mn(2+). Mg(2+) is required as a cofactor.

Its subcellular location is the cytoplasm. It carries out the reaction Endonucleolytic cleavage to 5'-phosphomonoester.. Functionally, endonuclease that specifically degrades the RNA of RNA-DNA hybrids. The polypeptide is Ribonuclease HII (Cytophaga hutchinsonii (strain ATCC 33406 / DSM 1761 / CIP 103989 / NBRC 15051 / NCIMB 9469 / D465)).